The following is a 159-amino-acid chain: Regulatory protein RecX (159 aa).

This sequence belongs to the RecX family.

The protein localises to the cytoplasm. Functionally, modulates RecA activity. The polypeptide is Regulatory protein RecX (Acinetobacter baylyi (strain ATCC 33305 / BD413 / ADP1)).